We begin with the raw amino-acid sequence, 440 residues long: Argininosuccinate lyase (440 aa).

The protein belongs to the lyase 1 family. Argininosuccinate lyase subfamily.

Its subcellular location is the cytoplasm. The enzyme catalyses 2-(N(omega)-L-arginino)succinate = fumarate + L-arginine. It functions in the pathway amino-acid biosynthesis; L-arginine biosynthesis; L-arginine from L-ornithine and carbamoyl phosphate: step 3/3. In Clostridium botulinum (strain Loch Maree / Type A3), this protein is Argininosuccinate lyase.